Consider the following 1328-residue polypeptide: Retrovirus-related Pol polyprotein from transposon TNT 1-94 (1328 aa).

Residues 189–265 (PENQGQALIT…SGQKNDDNTA (77 aa)) are disordered. A compositionally biased stretch (basic residues) spans 217-229 (ARGKSKNRSKSRV). The CCHC-type zinc-finger motif lies at 230–247 (RNCYNCNQPGHFKRDCPN). Basic and acidic residues predominate over residues 241-253 (FKRDCPNPRKGKG). Residue aspartate 297 is the For protease activity of the active site. Residues 473–642 (SSERKLNILD…IPERVWTNKE (170 aa)) form the Integrase catalytic domain. Polar residues predominate over residues 729–742 (TIPSTSNNPTSAES). The segment at 729–800 (TIPSTSNNPT…RVESRRYPST (72 aa)) is disordered. A compositionally biased stretch (basic and acidic residues) spans 770 to 798 (EVEHPTQGEEQHQPLRRSERPRVESRRYP).

The catalysed reaction is DNA(n) + a 2'-deoxyribonucleoside 5'-triphosphate = DNA(n+1) + diphosphate. The polypeptide is Retrovirus-related Pol polyprotein from transposon TNT 1-94 (Nicotiana tabacum (Common tobacco)).